A 129-amino-acid chain; its full sequence is Glycine cleavage system H protein (129 aa).

Positions 24–106 (TYTVGITEHA…YAGGWIFKIK (83 aa)) constitute a Lipoyl-binding domain. At K65 the chain carries N6-lipoyllysine.

It belongs to the GcvH family. In terms of assembly, the glycine cleavage system is composed of four proteins: P, T, L and H. (R)-lipoate serves as cofactor.

Its function is as follows. The glycine cleavage system catalyzes the degradation of glycine. The H protein shuttles the methylamine group of glycine from the P protein to the T protein. This is Glycine cleavage system H protein from Escherichia coli O127:H6 (strain E2348/69 / EPEC).